We begin with the raw amino-acid sequence, 88 residues long: Small ribosomal subunit protein bS20 (88 aa).

Disordered stretches follow at residues 1 to 25 (MPNIKSQIKRVKTNEKSRQRNKAVK) and 68 to 88 (HKNQAANRKSAISKKLNSLAA).

The protein belongs to the bacterial ribosomal protein bS20 family.

Functionally, binds directly to 16S ribosomal RNA. This is Small ribosomal subunit protein bS20 from Cutibacterium acnes (strain DSM 16379 / KPA171202) (Propionibacterium acnes).